Consider the following 609-residue polypeptide: Arginine--tRNA ligase (609 aa).

Positions 132–142 (ANPTSSLHVGH) match the 'HIGH' region motif.

Belongs to the class-I aminoacyl-tRNA synthetase family. As to quaternary structure, monomer.

The protein resides in the cytoplasm. It carries out the reaction tRNA(Arg) + L-arginine + ATP = L-arginyl-tRNA(Arg) + AMP + diphosphate. This chain is Arginine--tRNA ligase, found in Psychrobacter arcticus (strain DSM 17307 / VKM B-2377 / 273-4).